The following is a 469-amino-acid chain: Keratin, type II cytoskeletal 7 (469 aa).

Residue Ser2 is modified to N-acetylserine. A phosphoserine mark is found at Ser2, Ser6, and Ser7. Positions 2-90 (SIHFSSPVFT…DPSLQRVRQE (89 aa)) are head. O-linked (GlcNAc) serine glycosylation occurs at Ser12. Position 20 is a dimethylated arginine; alternate (Arg20). At Arg20 the chain carries Omega-N-methylarginine; alternate. Residues Ser53, Ser71, and Ser83 each carry the phosphoserine modification. Residues 90 to 126 (EEREQIKTLNNKFASFIDKVRFLEQQNKLLETKWTLL) are coil 1A. The region spanning 91–403 (EREQIKTLNN…KLLEGEESRL (313 aa)) is the IF rod domain. A Phosphothreonine modification is found at Thr97. Residues 127–144 (QEQKSAKSSRLPDIFEAQ) form a linker 1 region. Lys130 is covalently cross-linked (Glycyl lysine isopeptide (Lys-Gly) (interchain with G-Cter in SUMO2)). The segment at 145 to 236 (IAGLRGQLEA…TLNETELTEL (92 aa)) is coil 1B. The residue at position 179 (Lys179) is an N6-acetyllysine. The segment at 237–260 (QSQISDTSVVLSMDNSRSLDLDGI) is linker 12. A phosphoserine mark is found at Ser252 and Ser254. The segment at 261–399 (IAEVKAQYEE…ATYRKLLEGE (139 aa)) is coil 2. Glycyl lysine isopeptide (Lys-Gly) (interchain with G-Cter in SUMO2) cross-links involve residues Lys265 and Lys286. Thr289 carries the post-translational modification Phosphothreonine. Residues Lys296 and Lys331 each participate in a glycyl lysine isopeptide (Lys-Gly) (interchain with G-Cter in SUMO2) cross-link. The tail stretch occupies residues 400–469 (ESRLAGDGVG…ASASRRSARN (70 aa)).

This sequence belongs to the intermediate filament family. Heterotetramer of two type I and two type II keratins. Interacts with eukaryotic translation initiator factor 3 (eIF3) subunit EIF3S10. Interacts with GPER1. In terms of processing, arg-20 is dimethylated, probably to asymmetric dimethylarginine.

Blocks interferon-dependent interphase and stimulates DNA synthesis in cells. This Pan troglodytes (Chimpanzee) protein is Keratin, type II cytoskeletal 7.